A 202-amino-acid chain; its full sequence is Large ribosomal subunit protein mL40 (202 aa).

The disordered stretch occupies residues 42 to 79; it reads IQHQQTASYASKGKSGPPAGMFSGQKAGSKKSKGPKQV.

It belongs to the mitochondrion-specific ribosomal protein mL40 family. In terms of assembly, component of the mitochondrial large ribosomal subunit (mt-LSU). Mature N.crassa 74S mitochondrial ribosomes consist of a small (37S) and a large (54S) subunit. The 37S small subunit contains a 16S ribosomal RNA (16S mt-rRNA) and 32 different proteins. The 54S large subunit contains a 23S rRNA (23S mt-rRNA) and 42 different proteins. mL40 is binding to NAD.

It localises to the mitochondrion. Its function is as follows. Component of the mitochondrial ribosome (mitoribosome), a dedicated translation machinery responsible for the synthesis of mitochondrial genome-encoded proteins, including at least some of the essential transmembrane subunits of the mitochondrial respiratory chain. The mitoribosomes are attached to the mitochondrial inner membrane and translation products are cotranslationally integrated into the membrane. The sequence is that of Large ribosomal subunit protein mL40 (mrpl28) from Neurospora crassa (strain ATCC 24698 / 74-OR23-1A / CBS 708.71 / DSM 1257 / FGSC 987).